A 100-amino-acid polypeptide reads, in one-letter code: UPF0251 protein VVA1436 (100 aa).

The protein belongs to the UPF0251 family.

The polypeptide is UPF0251 protein VVA1436 (Vibrio vulnificus (strain YJ016)).